The chain runs to 254 residues: NAD-dependent protein deacetylase 1 (254 aa).

The Deacetylase sirtuin-type domain occupies Val-3 to Met-252. Residues Ala-29, Thr-33, Phe-40, Arg-41, Gln-105, Val-107, Asp-108, and His-123 each contribute to the NAD(+) site. Phe-40 provides a ligand contact to nicotinamide. 2 residues coordinate nicotinamide: Val-107 and Asp-108. His-123 acts as the Proton acceptor in catalysis. 4 residues coordinate Zn(2+): Cys-131, Cys-134, Cys-154, and Cys-157. Residues Thr-195, Ser-196, and Asn-220 each contribute to the NAD(+) site.

Belongs to the sirtuin family. Class U subfamily. The cofactor is Zn(2+).

Its subcellular location is the cytoplasm. It catalyses the reaction N(6)-acetyl-L-lysyl-[protein] + NAD(+) + H2O = 2''-O-acetyl-ADP-D-ribose + nicotinamide + L-lysyl-[protein]. NAD-dependent protein deacetylase which modulates the activities of several enzymes which are inactive in their acetylated form. Deacetylates the N-terminal lysine residue of Alba, the major archaeal chromatin protein and that, in turn, increases Alba's DNA binding affinity, thereby repressing transcription. The chain is NAD-dependent protein deacetylase 1 from Pyrobaculum aerophilum (strain ATCC 51768 / DSM 7523 / JCM 9630 / CIP 104966 / NBRC 100827 / IM2).